A 2192-amino-acid polypeptide reads, in one-letter code: Non-reducing polyketide synthase 1 (2192 aa).

Positions 5–243 (LLLGDQTADQ…VSIPIYAPYH (239 aa)) are N-terminal acylcarrier protein transacylase domain (SAT). In terms of domain architecture, Ketosynthase family 3 (KS3) spans 374-806 (NDKIAIVGMS…GGNTSLLLED (433 aa)). Catalysis depends on for beta-ketoacyl synthase activity residues cysteine 546, histidine 681, and histidine 724. Positions 905–1218 (FCFTGQGSQY…ANSMCALFLA (314 aa)) are malonyl-CoA:ACP transacylase (MAT) domain. Serine 993 acts as the For acyl/malonyl transferase activity in catalysis. The interval 1293-1610 (SCQKIIDEEF…RKVLNTFLPP (318 aa)) is product template (PT) domain. The N-terminal hotdog fold stretch occupies residues 1295-1430 (QKIIDEEFSA…CTVKFEDINT (136 aa)). A PKS/mFAS DH domain is found at 1295–1605 (QKIIDEEFSA…FQKIPRKVLN (311 aa)). Histidine 1327 (proton acceptor; for dehydratase activity) is an active-site residue. Positions 1458-1605 (AHVIGRGLAY…FQKIPRKVLN (148 aa)) are C-terminal hotdog fold. The active-site Proton donor; for dehydratase activity is aspartate 1518. Residues 1639-1668 (TQAQPAKAVPKQVTVAAPTPKAAPKKADLK) form a disordered region. The Carrier 1 domain maps to 1670-1747 (PAGPTIITRV…EMKKFFSQYD (78 aa)). Serine 1707 is modified (O-(pantetheine 4'-phosphoryl)serine). Residues 1748–1788 (GEVGTPEQDDSDSDSETSGDASTPMSEVGTPMTIPSSAVSE) form a disordered region. The segment covering 1754–1764 (EQDDSDSDSET) has biased composition (acidic residues). Residues 1798 to 1875 (APASGEVSIA…DVENALDMRP (78 aa)) form the Carrier 2 domain. The residue at position 1835 (serine 1835) is an O-(pantetheine 4'-phosphoryl)serine. Residues 1913 to 2164 (SKYPAATSVL…SMMKPPHVSI (252 aa)) are thioesterase (TE) domain.

Its function is as follows. Non-reducing polyketide synthase; part of the gene cluster that mediates the biosynthesis of elsinochromes, pigments consisting of at least four interconvertible tautomers (A, B, C and D) that have a core phenolic quinone to which various side chains are attached and which play an important role in fungal pathogenesis. The non-reducing polyketide synthase PKS1 was proposed to iteratively catalyze decarboxylation between acetyl-CoA and malonyl-CoA subunits for polyketide chain elongation. The released polyketide undergoes cyclization to form an aromatic ring, and proceeds via serial modification steps to produce the heptaketide back- bone of elsinochrome. As elsinochrome has a symmetrical structure, two identical heptaketides are fused to form a core 1,2-dihydrobenzo-perylene ring structure, which can then be successively modified to produce the various derivatives of elsinochrome. Some of these reactions may be cooperatively carried out, at least in part, by the products of RDT1, OXR1 and PKS1. PRF1, embedded within the elsinochrome cluster possibly functions to stabilize some of the biosynthetic enzymes required for elsinochrome production. As prefoldin is a hexamer containing 2 a and 4 b subunits, additional prefoldin subunits, whose coding genes may not immediately link to the elsinochrome biosynthetic gene cluster, are required to fulfill the chaperone function. In addition, no methyltransferase-coding gene exists within the biosynthetic gene cluster, even though elsinochrome has four methyl groups at positions C3, C7, C8 and C12. Apparently, the identified gene cluster does not contain the entire entourage of genes responsible for elsinochrome biosynthesis. Once elsinochrome is synthesized, it must be exported outside the fungal cells, which is probably accomplished by the ECT1 transporter, to avoid toxicity. In Elsinoe fawcettii (Citrus scab fungus), this protein is Non-reducing polyketide synthase 1.